Here is a 217-residue protein sequence, read N- to C-terminus: Adapter protein MecA (217 aa).

The protein belongs to the MecA family. In terms of assembly, homodimer.

Enables the recognition and targeting of unfolded and aggregated proteins to the ClpC protease or to other proteins involved in proteolysis. Acts negatively in the development of competence by binding ComK and recruiting it to the ClpCP protease. When overexpressed, inhibits sporulation. Also involved in Spx degradation by ClpC. In Alkalihalophilus pseudofirmus (strain ATCC BAA-2126 / JCM 17055 / OF4) (Bacillus pseudofirmus), this protein is Adapter protein MecA.